The chain runs to 556 residues: Formate--tetrahydrofolate ligase (556 aa).

65–72 (TPAGEGKS) serves as a coordination point for ATP.

This sequence belongs to the formate--tetrahydrofolate ligase family.

It catalyses the reaction (6S)-5,6,7,8-tetrahydrofolate + formate + ATP = (6R)-10-formyltetrahydrofolate + ADP + phosphate. It participates in one-carbon metabolism; tetrahydrofolate interconversion. The protein is Formate--tetrahydrofolate ligase of Streptococcus pneumoniae (strain 70585).